Reading from the N-terminus, the 241-residue chain is DnaA regulatory inactivator Hda (241 aa).

The protein belongs to the DnaA family. HdA subfamily. In terms of assembly, the active form seems to be an ADP-bound monomer. Forms the RIDA complex (regulatory inactivation of DnaA) of ATP-DnaA, ADP-Hda and the DNA-loaded beta sliding clamp (dnaN).

Mediates the interaction of DNA replication initiator protein DnaA with DNA polymerase subunit beta sliding clamp (dnaN). Stimulates hydrolysis of ATP-DnaA to ADP-DnaA, rendering DnaA inactive for reinitiation, a process called regulatory inhibition of DnaA or RIDA. In Salmonella agona (strain SL483), this protein is DnaA regulatory inactivator Hda.